Consider the following 587-residue polypeptide: Kelch-like protein 3 (587 aa).

Positions 1-24 (MEGESVKPSPQPTEQAGDGEKNRR) are disordered. A BTB domain is found at 50 to 117 (CDVMIVAEDV…IYTAEIEVTE (68 aa)). The BACK domain maps to 152-254 (CLGIRAFADV…PRDYLVQTVE (103 aa)). Residue T295 is modified to Phosphothreonine. Kelch repeat units lie at residues 302–347 (VMIV…FMAG), 348–394 (HVYA…VLND), 396–441 (LYAV…VVEG), 442–490 (KLYA…VLSG), 491–537 (QLYA…AVNG), and 539–585 (LYVV…VSAS). At T375 the chain carries Phosphothreonine. Residues S376 and S433 each carry the phosphoserine modification.

It belongs to the KLHL3 family. As to quaternary structure, homodimer. Component of the BCR(KLHL3) E3 ubiquitin ligase complex, at least composed of CUL3 and KLHL3 and RBX1. Interacts with CLDN8. In terms of processing, phosphorylation at Ser-433 by PKA or PKC decreases the interaction with WNK1 and WNK4, leading to inhibit their degradation by the BCR(KLHL3) complex. Phosphorylated at Ser-433 by PKC in response to angiotensin II signaling, decreasing ability to promote degradation of WNK1 and WNK4, leading to activation of Na-Cl cotransporter SLC12A3/NCC. Phosphorylation at Ser-433 is increased by insulin. Dephosphorylated at Ser-433 by calcineurin PPP3CA, promoting degradation of WNK1 and WNK4.

It is found in the cytoplasm. The protein resides in the cytoskeleton. The protein localises to the cytosol. The protein operates within protein modification; protein ubiquitination. Functionally, substrate-specific adapter of a BCR (BTB-CUL3-RBX1) E3 ubiquitin ligase complex that acts as a regulator of ion transport in the distal nephron. The BCR(KLHL3) complex acts by mediating ubiquitination and degradation of WNK1 and WNK4, two activators of Na-Cl cotransporter SLC12A3/NCC in distal convoluted tubule cells of kidney, thereby regulating NaCl reabsorption. The BCR(KLHL3) complex also mediates ubiquitination and degradation of WNK3. The BCR(KLHL3) complex also mediates ubiquitination of CLDN8, a tight-junction protein required for paracellular chloride transport in the kidney, leading to its degradation. In Rattus norvegicus (Rat), this protein is Kelch-like protein 3 (Klhl3).